A 229-amino-acid polypeptide reads, in one-letter code: Ribonuclease 3 (229 aa).

The RNase III domain maps to tryptophan 4 to glycine 133. Position 46 (glutamate 46) interacts with Mg(2+). The active site involves aspartate 50. Mg(2+)-binding residues include aspartate 119 and glutamate 122. The active site involves glutamate 122. The 70-residue stretch at aspartate 159–histidine 228 folds into the DRBM domain.

This sequence belongs to the ribonuclease III family. As to quaternary structure, homodimer. Mg(2+) serves as cofactor.

It localises to the cytoplasm. The catalysed reaction is Endonucleolytic cleavage to 5'-phosphomonoester.. Functionally, digests double-stranded RNA. Involved in the processing of primary rRNA transcript to yield the immediate precursors to the large and small rRNAs (23S and 16S). Processes some mRNAs, and tRNAs when they are encoded in the rRNA operon. Processes pre-crRNA and tracrRNA of type II CRISPR loci if present in the organism. The polypeptide is Ribonuclease 3 (Listeria innocua serovar 6a (strain ATCC BAA-680 / CLIP 11262)).